Here is a 104-residue protein sequence, read N- to C-terminus: Seminal ribonuclease (104 aa).

Intrachain disulfides connect cysteine 12-cysteine 70, cysteine 26-cysteine 81, cysteine 44-cysteine 96, and cysteine 51-cysteine 58. Substrate is bound by residues 27-31, lysine 52, and arginine 71; that span reads KPVNT.

The protein belongs to the pancreatic ribonuclease family. In terms of assembly, homodimer; disulfide-linked.

It is found in the secreted. It carries out the reaction an [RNA] containing cytidine + H2O = an [RNA]-3'-cytidine-3'-phosphate + a 5'-hydroxy-ribonucleotide-3'-[RNA].. The catalysed reaction is an [RNA] containing uridine + H2O = an [RNA]-3'-uridine-3'-phosphate + a 5'-hydroxy-ribonucleotide-3'-[RNA].. This chain is Seminal ribonuclease (SRN), found in Saiga tatarica (Saiga antelope).